A 54-amino-acid polypeptide reads, in one-letter code: Beta-2-microglobulin (54 aa).

The Ig-like C1-type domain maps to 3–41; it reads KVELSDLSFNKDWSFYLLAHREFVPTATDKYACRVSHIT.

This sequence belongs to the beta-2-microglobulin family. As to quaternary structure, heterodimer of an alpha chain and a beta chain. Beta-2-microglobulin is the beta-chain of major histocompatibility complex class I molecules.

It localises to the secreted. Functionally, component of the class I major histocompatibility complex (MHC). Involved in the presentation of peptide antigens to the immune system. This is Beta-2-microglobulin (B2M) from Mesocricetus auratus (Golden hamster).